A 473-amino-acid polypeptide reads, in one-letter code: 3-isopropylmalate dehydratase large subunit (473 aa).

Residues Cys-354, Cys-414, and Cys-417 each coordinate [4Fe-4S] cluster.

It belongs to the aconitase/IPM isomerase family. LeuC type 1 subfamily. In terms of assembly, heterodimer of LeuC and LeuD. It depends on [4Fe-4S] cluster as a cofactor.

The enzyme catalyses (2R,3S)-3-isopropylmalate = (2S)-2-isopropylmalate. The protein operates within amino-acid biosynthesis; L-leucine biosynthesis; L-leucine from 3-methyl-2-oxobutanoate: step 2/4. In terms of biological role, catalyzes the isomerization between 2-isopropylmalate and 3-isopropylmalate, via the formation of 2-isopropylmaleate. In Mycobacterium marinum (strain ATCC BAA-535 / M), this protein is 3-isopropylmalate dehydratase large subunit.